The following is a 170-amino-acid chain: Large ribosomal subunit protein uL18c (170 aa).

The transit peptide at 1-63 (MLASPALAGA…QADRIARHVR (63 aa)) directs the protein to the chloroplast.

This sequence belongs to the universal ribosomal protein uL18 family. Part of the 50S ribosomal subunit; contacts the 5S rRNA.

The protein resides in the plastid. It is found in the chloroplast. Binds 5S rRNA, forms part of the central protuberance of the 50S subunit. The protein is Large ribosomal subunit protein uL18c (RPL18) of Oryza sativa subsp. japonica (Rice).